Reading from the N-terminus, the 350-residue chain is Protein-arginine kinase (350 aa).

Residues 21 to 253 form the Phosphagen kinase C-terminal domain; it reads IVISSRIRLA…VRLADQEREA (233 aa). Residues 24 to 28, His90, Arg124, 175 to 179, and 206 to 211 each bind ATP; these read SSRIR, RASTM, and RGLYGE. The RDXXRA motif of the pArg binding pocket involved in allosteric regulation signature appears at 336-341; that stretch reads RDVHRA.

It belongs to the ATP:guanido phosphotransferase family.

It carries out the reaction L-arginyl-[protein] + ATP = N(omega)-phospho-L-arginyl-[protein] + ADP + H(+). With respect to regulation, appears to be allosterically activated by the binding of pArg-containing polypeptides to the pArg-binding pocket localized in the C-terminal domain of McsB. Functionally, catalyzes the specific phosphorylation of arginine residues in proteins. The chain is Protein-arginine kinase from Moorella thermoacetica (strain ATCC 39073 / JCM 9320).